The following is a 333-amino-acid chain: N-acetyl-gamma-glutamyl-phosphate reductase (333 aa).

Cysteine 136 is a catalytic residue.

The protein belongs to the NAGSA dehydrogenase family. Type 1 subfamily.

Its subcellular location is the cytoplasm. The enzyme catalyses N-acetyl-L-glutamate 5-semialdehyde + phosphate + NADP(+) = N-acetyl-L-glutamyl 5-phosphate + NADPH + H(+). It participates in amino-acid biosynthesis; L-arginine biosynthesis; N(2)-acetyl-L-ornithine from L-glutamate: step 3/4. Its function is as follows. Catalyzes the NADPH-dependent reduction of N-acetyl-5-glutamyl phosphate to yield N-acetyl-L-glutamate 5-semialdehyde. The chain is N-acetyl-gamma-glutamyl-phosphate reductase from Xylella fastidiosa (strain 9a5c).